The sequence spans 402 residues: Speedy protein E6 (402 aa).

Residues 1–89 are disordered; it reads MDRTETRFRK…EEPEKELAPE (89 aa). The segment covering 16–39 has biased composition (polar residues); it reads GKITTSRQPHPQNEQSPQRSTSGY. Residues 76 to 89 show a composition bias toward acidic residues; the sequence is DESEEEPEKELAPE.

This sequence belongs to the Speedy/Ringo family.

The sequence is that of Speedy protein E6 (SPDYE6) from Homo sapiens (Human).